We begin with the raw amino-acid sequence, 420 residues long: Serine hydroxymethyltransferase (420 aa).

Residues leucine 121 and 125 to 127 (GHL) contribute to the (6S)-5,6,7,8-tetrahydrofolate site. Lysine 229 carries the N6-(pyridoxal phosphate)lysine modification.

Belongs to the SHMT family. In terms of assembly, homodimer. Pyridoxal 5'-phosphate serves as cofactor.

The protein localises to the cytoplasm. The enzyme catalyses (6R)-5,10-methylene-5,6,7,8-tetrahydrofolate + glycine + H2O = (6S)-5,6,7,8-tetrahydrofolate + L-serine. The protein operates within one-carbon metabolism; tetrahydrofolate interconversion. Its pathway is amino-acid biosynthesis; glycine biosynthesis; glycine from L-serine: step 1/1. Catalyzes the reversible interconversion of serine and glycine with tetrahydrofolate (THF) serving as the one-carbon carrier. This reaction serves as the major source of one-carbon groups required for the biosynthesis of purines, thymidylate, methionine, and other important biomolecules. Also exhibits THF-independent aldolase activity toward beta-hydroxyamino acids, producing glycine and aldehydes, via a retro-aldol mechanism. This is Serine hydroxymethyltransferase from Wigglesworthia glossinidia brevipalpis.